Reading from the N-terminus, the 236-residue chain is HTH-type transcriptional regulator SACE_5812 (236 aa).

An HTH tetR-type domain is found at Leu30–Val90. The segment at residues Ser53–Val72 is a DNA-binding region (H-T-H motif).

In terms of biological role, transcriptional regulator that inhibits erythromycin production. Directly represses the expression of SACE_5813, eryAI (encoding polyketide synthase I) and ermE (encoding rRNA methyltransferase), suggesting its direct regulation of the erythromycin biosynthesis gene cluster. May play an important role in regulating secondary metabolism in actinomycetes. The polypeptide is HTH-type transcriptional regulator SACE_5812 (Saccharopolyspora erythraea (strain ATCC 11635 / DSM 40517 / JCM 4748 / NBRC 13426 / NCIMB 8594 / NRRL 2338)).